The following is a 93-amino-acid chain: Large ribosomal subunit protein uL23cz/uL23cy (93 aa).

Belongs to the universal ribosomal protein uL23 family. As to quaternary structure, part of the 50S ribosomal subunit.

It is found in the plastid. Its subcellular location is the chloroplast. Binds to 23S rRNA. In Nandina domestica (Heavenly bamboo), this protein is Large ribosomal subunit protein uL23cz/uL23cy (rpl23-A).